A 150-amino-acid chain; its full sequence is Putative pre-16S rRNA nuclease (150 aa).

The protein belongs to the YqgF nuclease family.

The protein localises to the cytoplasm. Functionally, could be a nuclease involved in processing of the 5'-end of pre-16S rRNA. The polypeptide is Putative pre-16S rRNA nuclease (Protochlamydia amoebophila (strain UWE25)).